A 425-amino-acid chain; its full sequence is O-methyltransferase AMT9 (425 aa).

Residues 257–258 (GG), Asp280, 306–307 (DF), Arg322, and Arg323 each bind S-adenosyl-L-methionine. The active-site Proton acceptor is His326.

The protein belongs to the class I-like SAM-binding methyltransferase superfamily. Cation-independent O-methyltransferase family.

It functions in the pathway mycotoxin biosynthesis. Functionally, O-methyltransferase; part of the gene clusters that mediate the biosynthesis of AM-toxins, host-selective toxins (HSTs) causing Alternaria blotch on apple, a worldwide distributed disease. AM-toxins are cyclic depsipeptides containing the 3 residues 2-hydroxy-isovaleric acid (2-HIV), dehydroalanine, L-alanine which are common for all 3 AM-toxins I to III. The fourth precursor is L-alpha-amino-methoxyphenyl-valeric acid (L-Amv) for AM-toxin I, L-alpha-amino-phenyl-valeric acid (L-Apv) for AM-toxin II, and L-alpha-amino-hydroxyphenyl-valeric acid (L-Ahv) for AM-toxin III. AM-toxins have two target sites for affecting susceptible apple cells; they cause invagination of the plasma membrane and electrolyte loss and chloroplast disorganization. The non-ribosomal peptide synthetase AMT1 contains 4 catalytic modules and is responsible for activation of each residue in AM-toxin. The aldo-keto reductase AMT2 catalyzes the conversion of 2-keto-isovaleric acid (2-KIV) to 2-hydroxy-isovaleric acid (2-HIV), one of the precursor residues incorporated by AMT1 during AM-toxin biosynthesis, by reduction of its ketone to an alcohol. The cytochrome P450 monooxygenase AMT3 and the thioesterase AMT4 are also important for AM-toxin production, but their exact function within the AM-toxin biosynthesis are not known yet. Up to 21 proteins (including AMT1 to AMT4) are predicted to be involved in AM-toxin biosynthesis since their expression ishighly up-regulated in AM-toxin-producing cultures. In Alternaria alternata (Alternaria rot fungus), this protein is O-methyltransferase AMT9.